Reading from the N-terminus, the 212-residue chain is ER lumen protein-retaining receptor 2 (212 aa).

The Lumenal portion of the chain corresponds to 1–4 (MNIF). Residues 5–24 (RLTGDLSHLAAIVILLLKIW) traverse the membrane as a helical segment. At 25–32 (KTRSCAGI) the chain is on the cytoplasmic side. A helical transmembrane segment spans residues 33–52 (SGKSQLLFALVFTTRYLDLF). Residues 47–48 (RY) form an interaction with the K-D-E-L motif on target proteins region. The Lumenal segment spans residues 53–58 (TSFISL). The helical transmembrane segment at 59–79 (YNTSMKLIYIACSYATVYLIY) threads the bilayer. Over 80–92 (MKFKATYDGNHDT) the chain is Cytoplasmic. The chain crosses the membrane as a helical span at residues 93-110 (FRVEFLVVPVGGLSFLVN). The Lumenal segment spans residues 111-116 (HDFSPL). Residues 117-135 (EILWTFSIYLESVAILPQL) traverse the membrane as a helical segment. Topologically, residues 136–149 (FMISKTGEAETITT) are cytoplasmic. A helical membrane pass occupies residues 150 to 168 (HYLFFLGLYRALYLVNWIW). The interval 159–169 (RALYLVNWIWR) is interaction with the K-D-E-L motif on target proteins. The Lumenal segment spans residues 169-178 (RFYFEGFFDL). The helical transmembrane segment at 179 to 199 (IAVVAGVVQTILYCDFFYLYI) threads the bilayer. Residues 200–212 (TKVLKGKKLSLPA) are Cytoplasmic-facing. An important for recycling of cargo proteins with the sequence motif K-D-E-L from the Golgi to the endoplasmic reticulum region spans residues 204–207 (KGKK).

It belongs to the ERD2 family.

The protein localises to the endoplasmic reticulum membrane. It is found in the golgi apparatus membrane. Its subcellular location is the cytoplasmic vesicle. It localises to the COPI-coated vesicle membrane. Membrane receptor that binds the K-D-E-L sequence motif in the C-terminal part of endoplasmic reticulum resident proteins and maintains their localization in that compartment by participating to their vesicle-mediated recycling back from the Golgi. Binding is pH dependent, and is optimal at pH 5-5.4. This chain is ER lumen protein-retaining receptor 2 (Kdelr2), found in Mus musculus (Mouse).